Consider the following 530-residue polypeptide: UDP-N-acetylmuramoyl-L-alanyl-D-glutamate--2,6-diaminopimelate ligase (530 aa).

Ser21 is a binding site for UDP-N-acetyl-alpha-D-muramoyl-L-alanyl-D-glutamate. 99–105 contacts ATP; it reads GTNGKSS. Residues 145 to 146, Ser172, Gln178, and Arg180 each bind UDP-N-acetyl-alpha-D-muramoyl-L-alanyl-D-glutamate; that span reads TT. Lys212 is modified (N6-carboxylysine). Positions 221 to 269 constitute an RPE1 insert domain; it reads FKPAYREEFKGDTEHSTTAYILVREDASTGSTSKLLLEAKFGKMSTEYL. Residues Arg422, 446-449, Gly496, and Glu500 contribute to the meso-2,6-diaminopimelate site; that span reads DNPR. A Meso-diaminopimelate recognition motif motif is present at residues 446–449; that stretch reads DNPR.

The protein belongs to the MurCDEF family. MurE subfamily. Mg(2+) serves as cofactor. Carboxylation is probably crucial for Mg(2+) binding and, consequently, for the gamma-phosphate positioning of ATP.

Its subcellular location is the cytoplasm. It catalyses the reaction UDP-N-acetyl-alpha-D-muramoyl-L-alanyl-D-glutamate + meso-2,6-diaminopimelate + ATP = UDP-N-acetyl-alpha-D-muramoyl-L-alanyl-gamma-D-glutamyl-meso-2,6-diaminopimelate + ADP + phosphate + H(+). It functions in the pathway cell wall biogenesis; peptidoglycan biosynthesis. Catalyzes the addition of meso-diaminopimelic acid to the nucleotide precursor UDP-N-acetylmuramoyl-L-alanyl-D-glutamate (UMAG) in the biosynthesis of bacterial cell-wall peptidoglycan. The protein is UDP-N-acetylmuramoyl-L-alanyl-D-glutamate--2,6-diaminopimelate ligase of Rickettsia felis (strain ATCC VR-1525 / URRWXCal2) (Rickettsia azadi).